The primary structure comprises 131 residues: Class I hydrophobin POH2 (131 aa).

The first 21 residues, 1 to 21 (MFFRTSSLFTTIVAFTVMAAA), serve as a signal peptide directing secretion. Cystine bridges form between Cys50–Cys110, Cys57–Cys104, Cys58–Cys91, and Cys111–Cys124. 2 N-linked (GlcNAc...) asparagine glycosylation sites follow: Asn115 and Asn128.

This sequence belongs to the fungal hydrophobin family. Self-assembles to form functional amyloid fibrils called rodlets. Self-assembly into fibrillar rodlets occurs spontaneously at hydrophobic:hydrophilic interfaces and the rodlets further associate laterally to form amphipathic monolayers. Expressionn is switched off in the fruiting bodies but abundantly expressed in the vegetative mycelium of both monokaryon and dikaryon.

Its subcellular location is the secreted. The protein localises to the cell wall. Functionally, aerial growth, conidiation, and dispersal of filamentous fungi in the environment rely upon a capability of their secreting small amphipathic proteins called hydrophobins (HPBs) with low sequence identity. Class I can self-assemble into an outermost layer of rodlet bundles on aerial cell surfaces, conferring cellular hydrophobicity that supports fungal growth, development and dispersal; whereas Class II form highly ordered films at water-air interfaces through intermolecular interactions but contribute nothing to the rodlet structure. POH2 is a class I hydrophobin that causes a large drop in the water-surface tension, enabling hyphae to breach the interface and grow into the air, in both the primary and the secondary mycelium. In the latter mycelium POH2 maight also play a role in the emergence of fruiting bodies. Secreted POH2 could also play a role in facilitating lignin degradation. In Pleurotus ostreatus (Oyster mushroom), this protein is Class I hydrophobin POH2.